A 402-amino-acid chain; its full sequence is MDTKAFKRSLQQSNNYHRKGFGHETEVMGTMNTEYQSSLIQKIRENNYQWQEGDVTIKLAEAFGFCWGVERAVAMAYETRQHFPQEKIWITNEIIHNPSVNQRLLEMNVGFIEVINGSKDFSVVEAGDVVILPAFGASVTEMQLLNDKGCTIVDTTCPWVSKVWNSVEKHKKKDYTSIIHGKYKHEETVATSSFAGTYLVVLNLKEAQYVCDYILNGGNKDEFLEKFKNAHSEGFDPDKDLIRLGIANQTTMLKSETEQIGKLFETTMLKKYGPTELNEHFMSFNTICDATQERQDAMLNLVEEEVDVMVVIGGFNSSNTTHLQEISIEKGIDSYHIDSDKRILPGNKIEHKPLEKDIETKENWLPDGKIIVGVTSGASTPDKVVEAVIERIFEEKNAGVLV.

Position 66 (Cys-66) interacts with [4Fe-4S] cluster. Position 96 (His-96) interacts with (2E)-4-hydroxy-3-methylbut-2-enyl diphosphate. Residue His-96 coordinates dimethylallyl diphosphate. His-96 contacts isopentenyl diphosphate. Cys-157 provides a ligand contact to [4Fe-4S] cluster. His-185 contacts (2E)-4-hydroxy-3-methylbut-2-enyl diphosphate. A dimethylallyl diphosphate-binding site is contributed by His-185. His-185 is a binding site for isopentenyl diphosphate. Glu-187 serves as the catalytic Proton donor. Residue Thr-250 participates in (2E)-4-hydroxy-3-methylbut-2-enyl diphosphate binding. Cys-288 contacts [4Fe-4S] cluster. 4 residues coordinate (2E)-4-hydroxy-3-methylbut-2-enyl diphosphate: Ser-317, Ser-318, Asn-319, and Ser-379. Dimethylallyl diphosphate-binding residues include Ser-317, Ser-318, Asn-319, and Ser-379. Residues Ser-317, Ser-318, Asn-319, and Ser-379 each coordinate isopentenyl diphosphate.

This sequence belongs to the IspH family. It depends on [4Fe-4S] cluster as a cofactor.

The enzyme catalyses isopentenyl diphosphate + 2 oxidized [2Fe-2S]-[ferredoxin] + H2O = (2E)-4-hydroxy-3-methylbut-2-enyl diphosphate + 2 reduced [2Fe-2S]-[ferredoxin] + 2 H(+). It carries out the reaction dimethylallyl diphosphate + 2 oxidized [2Fe-2S]-[ferredoxin] + H2O = (2E)-4-hydroxy-3-methylbut-2-enyl diphosphate + 2 reduced [2Fe-2S]-[ferredoxin] + 2 H(+). Its pathway is isoprenoid biosynthesis; dimethylallyl diphosphate biosynthesis; dimethylallyl diphosphate from (2E)-4-hydroxy-3-methylbutenyl diphosphate: step 1/1. It participates in isoprenoid biosynthesis; isopentenyl diphosphate biosynthesis via DXP pathway; isopentenyl diphosphate from 1-deoxy-D-xylulose 5-phosphate: step 6/6. Its function is as follows. Catalyzes the conversion of 1-hydroxy-2-methyl-2-(E)-butenyl 4-diphosphate (HMBPP) into a mixture of isopentenyl diphosphate (IPP) and dimethylallyl diphosphate (DMAPP). Acts in the terminal step of the DOXP/MEP pathway for isoprenoid precursor biosynthesis. The polypeptide is 4-hydroxy-3-methylbut-2-enyl diphosphate reductase (Crocosphaera subtropica (strain ATCC 51142 / BH68) (Cyanothece sp. (strain ATCC 51142))).